The primary structure comprises 332 residues: 2,3-diketo-L-gulonate reductase (332 aa).

Residue His44 is the Proton donor of the active site. NAD(+) contacts are provided by residues 168–174 (ITMVDMS), 224–225 (WK), and 304–306 (GHE).

This sequence belongs to the LDH2/MDH2 oxidoreductase family. DlgD subfamily. As to quaternary structure, homodimer.

The protein resides in the cytoplasm. It carries out the reaction 3-dehydro-L-gulonate + NAD(+) = 2,3-dioxo-L-gulonate + NADH + H(+). It catalyses the reaction 3-dehydro-L-gulonate + NADP(+) = 2,3-dioxo-L-gulonate + NADPH + H(+). Its function is as follows. Catalyzes the reduction of 2,3-diketo-L-gulonate in the presence of NADH, to form 3-keto-L-gulonate. This is 2,3-diketo-L-gulonate reductase from Salmonella typhi.